Consider the following 188-residue polypeptide: Mitochondrial import inner membrane translocase subunit Tim23B (188 aa).

Helical transmembrane passes span 73 to 93 (FELA…FGAM) and 125 to 145 (ALWA…GVII).

The protein belongs to the Tim17/Tim22/Tim23 family.

It is found in the mitochondrion inner membrane. Functionally, may participate in the translocation of transit peptide-containing proteins across the mitochondrial inner membrane. the PAM complex. This chain is Mitochondrial import inner membrane translocase subunit Tim23B, found in Homo sapiens (Human).